Consider the following 598-residue polypeptide: UvrABC system protein C (598 aa).

One can recognise a GIY-YIG domain in the interval 13–91 (TLPGVYRMVD…IKGLKPRFNI (79 aa)). A UVR domain is found at 200–235 (TALTEEITAQMNAAAENLDFETAAYLRDRLRMLATV).

Belongs to the UvrC family. In terms of assembly, interacts with UvrB in an incision complex.

It is found in the cytoplasm. The UvrABC repair system catalyzes the recognition and processing of DNA lesions. UvrC both incises the 5' and 3' sides of the lesion. The N-terminal half is responsible for the 3' incision and the C-terminal half is responsible for the 5' incision. The polypeptide is UvrABC system protein C (Thiobacillus denitrificans (strain ATCC 25259 / T1)).